Consider the following 331-residue polypeptide: DSC E3 ubiquitin ligase complex subunit D (331 aa).

Residue asparagine 26 is glycosylated (N-linked (GlcNAc...) asparagine). The next 3 membrane-spanning stretches (helical) occupy residues 63 to 83 (ILIY…ILFA), 107 to 127 (PFIG…NFFT), and 159 to 179 (LFLL…LIVE). Residues 188-225 (STTSTEILRVQDHDSEERGVHRTRPESRSSVVGAELDE) form a disordered region. Residues 196–214 (RVQDHDSEERGVHRTRPES) show a composition bias toward basic and acidic residues.

In terms of assembly, component of the DSC E3 ubiquitin ligase complex composed of dscA, dscB, dscC and dscD.

The protein resides in the endoplasmic reticulum membrane. It functions in the pathway protein modification; protein ubiquitination. Functionally, component of the DSC E3 ubiquitin ligase complex which is required for the srbA transcriptional activator proteolytic cleavage to release the soluble transcription factor from the membrane in low oxygen or sterol conditions. Required for growth during hypoxia and triazole drug susceptibility, as well as for virulence in a murine model of invasive pulmonary aspergillosis (IPA). In Aspergillus fumigatus (strain ATCC MYA-4609 / CBS 101355 / FGSC A1100 / Af293) (Neosartorya fumigata), this protein is DSC E3 ubiquitin ligase complex subunit D.